The sequence spans 423 residues: Carboxypeptidase B2 (423 aa).

The first 22 residues, 1-22 (MKLCSLAVLVPIVLFCEQHVFA), serve as a signal peptide directing secretion. A propeptide spans 23–114 (FQSGQVLAAL…QISNDTVSPR (92 aa)) (activation peptide). N-linked (GlcNAc...) asparagine glycans are attached at residues asparagine 44, asparagine 73, and asparagine 85. Residue asparagine 108 is glycosylated (N-linked (GlcNAc...) (complex) asparagine). A Peptidase M14 domain is found at 122–419 (QYHSLNEIYS…AAVSKIAWHV (298 aa)). Cysteine 178 and cysteine 191 are oxidised to a cystine. Zn(2+)-binding residues include histidine 181 and glutamate 184. Substrate-binding positions include 181–184 (HARE) and arginine 239. N-linked (GlcNAc...) asparagine; partial glycosylation is present at asparagine 241. Cystine bridges form between cysteine 250/cysteine 274 and cysteine 265/cysteine 279. 256–257 (NR) contacts substrate. Histidine 310 contributes to the Zn(2+) binding site. Substrate is bound by residues 311-312 (SY) and tyrosine 363. The Proton donor/acceptor role is filled by glutamate 385.

This sequence belongs to the peptidase M14 family. Zn(2+) is required as a cofactor. N-glycosylated. N-glycan at Asn-108: Hex5HexNAc4. As to expression, plasma; synthesized in the liver.

The protein resides in the secreted. It catalyses the reaction Release of C-terminal Arg and Lys from a polypeptide.. TAFI/CPB2 is unique among carboxypeptidases in that it spontaneously inactivates with a short half-life, a property that is crucial for its role in controlling blood clot lysis. The zymogen is stabilized by interactions with the activation peptide. Release of the activation peptide increases a dynamic flap mobility and in time this leads to conformational changes that disrupt the catalytic site and expose a cryptic thrombin-cleavage site present at Arg-324. Its function is as follows. Cleaves C-terminal arginine or lysine residues from biologically active peptides such as kinins or anaphylatoxins in the circulation thereby regulating their activities. Down-regulates fibrinolysis by removing C-terminal lysine residues from fibrin that has already been partially degraded by plasmin. This chain is Carboxypeptidase B2 (CPB2), found in Homo sapiens (Human).